The chain runs to 349 residues: Isopentenyl-diphosphate delta-isomerase (349 aa).

6–7 (RK) serves as a coordination point for substrate. FMN contacts are provided by residues 62 to 64 (AMT), Ser-93, and Asn-122. Gln-152 contacts substrate. Glu-153 contacts Mg(2+). Residues Lys-184, Thr-214, 258–259 (GG), and 280–281 (AG) contribute to the FMN site.

It belongs to the IPP isomerase type 2 family. In terms of assembly, homooctamer. Dimer of tetramers. FMN is required as a cofactor. NADPH serves as cofactor. Requires Mg(2+) as cofactor.

The protein resides in the cytoplasm. The catalysed reaction is isopentenyl diphosphate = dimethylallyl diphosphate. Its function is as follows. Involved in the biosynthesis of isoprenoids. Catalyzes the 1,3-allylic rearrangement of the homoallylic substrate isopentenyl (IPP) to its allylic isomer, dimethylallyl diphosphate (DMAPP). This is Isopentenyl-diphosphate delta-isomerase from Bacillus anthracis (strain A0248).